The sequence spans 276 residues: Small ribosomal subunit protein uS2 (276 aa).

The disordered stretch occupies residues 251-276 (AEEAPAAAEEAPAAEPAAEETPAAEA). The span at 252-276 (EEAPAAAEEAPAAEPAAEETPAAEA) shows a compositional bias: low complexity.

It belongs to the universal ribosomal protein uS2 family.

In Jannaschia sp. (strain CCS1), this protein is Small ribosomal subunit protein uS2.